The sequence spans 978 residues: NACHT, LRR and PYD domains-containing protein 4E (978 aa).

The Pyrin domain maps to M1–G93. Positions H148–H471 constitute an NACHT domain. G154–S161 is an ATP binding site. 6 LRR repeats span residues C594–T617, L694–A717, S746–P773, N802–G825, N859–D882, and C916–A940.

Belongs to the NLRP family.

May be involved in inflammation and recognition of cytosolic pathogen-associated molecular patterns (PAMPs) not intercepted by membrane-bound receptors. This is NACHT, LRR and PYD domains-containing protein 4E (Nlrp4e) from Mus musculus (Mouse).